The primary structure comprises 101 residues: Large ribosomal subunit protein uL23 (101 aa).

This sequence belongs to the universal ribosomal protein uL23 family. In terms of assembly, part of the 50S ribosomal subunit. Contacts protein L29, and trigger factor when it is bound to the ribosome.

In terms of biological role, one of the early assembly proteins it binds 23S rRNA. One of the proteins that surrounds the polypeptide exit tunnel on the outside of the ribosome. Forms the main docking site for trigger factor binding to the ribosome. This chain is Large ribosomal subunit protein uL23, found in Aromatoleum aromaticum (strain DSM 19018 / LMG 30748 / EbN1) (Azoarcus sp. (strain EbN1)).